Here is a 349-residue protein sequence, read N- to C-terminus: GDP-mannose:glycolipid 4-beta-D-mannosyltransferase (349 aa).

A signal peptide spans 1 to 14; sequence MSASASLPVTRAAA.

The protein belongs to the glycosyltransferase 94 family.

Its subcellular location is the cell inner membrane. The catalysed reaction is beta-D-GlcA-(1-&gt;2)-alpha-D-Man-(1-&gt;3)-beta-D-Glc-(1-&gt;4)-alpha-D-Glc-di-trans,octa-cis-undecaprenyl diphosphate + GDP-alpha-D-mannose = beta-D-Man-(1-&gt;4)-beta-D-GlcA-(1-&gt;2)-alpha-D-Man-(1-&gt;3)-beta-D-Glc-(1-&gt;4)-alpha-D-Glc-di-trans,octa-cis-undecaprenyl diphosphate + GDP + H(+). It participates in glycan biosynthesis; xanthan biosynthesis. Its function is as follows. Nonprocessive beta-mannosyltransferase that catalyzes the transfer of a mannose residue from GDP-mannose to glucuronic acid-beta-1,2-mannose-alpha-1,3-glucose-beta-1,4-glucose-PP-polyisoprenyl to form the lipid-linked pentasaccharide repeating unit of xanthan, Man-GlcA-Man-Glc(2)-PP-Pol. Is involved in the biosynthesis of the exopolysaccharide xanthan. To a lesser extent, can also use ADP-Man and even GDP-Glc as sugar donor substrates in vitro. Is unable to transfer a Man residue to the free-tetrasaccharide GlcA-Man-Glc(2) used as an acceptor, which indicates that the diphosphate group and the lipid moiety in the acceptor substrate are of major importance for acceptor binding and catalysis. In Xanthomonas campestris pv. campestris, this protein is GDP-mannose:glycolipid 4-beta-D-mannosyltransferase (gumI).